Here is an 82-residue protein sequence, read N- to C-terminus: Chaperone protein DnaJ 1 (82 aa).

The interval 1–33 (YHLGGPPVTLKLPPGTPAGRTMRARGKGAVRKD) is disordered.

It belongs to the DnaJ family. Homodimer. It depends on Zn(2+) as a cofactor.

It is found in the cytoplasm. Participates actively in the response to hyperosmotic and heat shock by preventing the aggregation of stress-denatured proteins and by disaggregating proteins, also in an autonomous, DnaK-independent fashion. Unfolded proteins bind initially to DnaJ; upon interaction with the DnaJ-bound protein, DnaK hydrolyzes its bound ATP, resulting in the formation of a stable complex. GrpE releases ADP from DnaK; ATP binding to DnaK triggers the release of the substrate protein, thus completing the reaction cycle. Several rounds of ATP-dependent interactions between DnaJ, DnaK and GrpE are required for fully efficient folding. Also involved, together with DnaK and GrpE, in the DNA replication of plasmids through activation of initiation proteins. The protein is Chaperone protein DnaJ 1 (dnaJ1) of Streptomyces albus G.